A 379-amino-acid polypeptide reads, in one-letter code: Homoserine O-acetyltransferase (379 aa).

An AB hydrolase-1 domain is found at 52–356 (NVVVVLHALT…VYGHDGFLVE (305 aa)). The Nucleophile role is filled by S157. R227 is a substrate binding site. Active-site residues include D320 and H350. Substrate is bound at residue D351.

Belongs to the AB hydrolase superfamily. MetX family. As to quaternary structure, homodimer.

The protein resides in the cytoplasm. It carries out the reaction L-homoserine + acetyl-CoA = O-acetyl-L-homoserine + CoA. It participates in amino-acid biosynthesis; L-methionine biosynthesis via de novo pathway; O-acetyl-L-homoserine from L-homoserine: step 1/1. Its function is as follows. Transfers an acetyl group from acetyl-CoA to L-homoserine, forming acetyl-L-homoserine. The polypeptide is Homoserine O-acetyltransferase (Mycobacterium bovis (strain ATCC BAA-935 / AF2122/97)).